The primary structure comprises 78 residues: Exodeoxyribonuclease 7 small subunit (78 aa).

It belongs to the XseB family. Heterooligomer composed of large and small subunits.

The protein localises to the cytoplasm. It catalyses the reaction Exonucleolytic cleavage in either 5'- to 3'- or 3'- to 5'-direction to yield nucleoside 5'-phosphates.. In terms of biological role, bidirectionally degrades single-stranded DNA into large acid-insoluble oligonucleotides, which are then degraded further into small acid-soluble oligonucleotides. The polypeptide is Exodeoxyribonuclease 7 small subunit (Psychromonas ingrahamii (strain DSM 17664 / CCUG 51855 / 37)).